The primary structure comprises 74 residues: Omega-conotoxin-like PuIIA (74 aa).

The first 22 residues, 1-22 (MKLTCVVIVAVLFLTACQLITA), serve as a signal peptide directing secretion. A propeptide spanning residues 23–46 (ETYSRGEQKHRALSSTDKNSKLTR) is cleaved from the precursor. Cystine bridges form between cysteine 48/cysteine 62, cysteine 55/cysteine 66, and cysteine 61/cysteine 73.

This sequence belongs to the conotoxin O1 superfamily. Expressed by the venom duct.

Its subcellular location is the secreted. Omega-conotoxins act at presynaptic membranes, they bind and block voltage-gated calcium channels (Cav). The polypeptide is Omega-conotoxin-like PuIIA (Conus pulicarius (Flea-bitten cone)).